A 1067-amino-acid polypeptide reads, in one-letter code: Myocardin-related transcription factor B (1067 aa).

RPEL repeat units follow at residues 46–71 (EVLQ…PPLK), 90–115 (NFLK…EETL), and 134–159 (DDLN…PVDL). Disordered regions lie at residues 175–223 (NLDT…NTTI) and 249–286 (PLSC…PRVK). Polar residues-rich tracts occupy residues 193-203 (QPASQESQGSA) and 212-223 (SDSSSPVSNTTI). Positions 268–283 (KHTEKPRSKKSKDPKP) are enriched in basic and acidic residues. The 35-residue stretch at 390-424 (LDDMKVAELKMELKLRGLPVSGTKMDLIERLKPFQ) folds into the SAP domain. A coiled-coil region spans residues 540–594 (GNTPNVELDAVEKDRKLQEKEKQIEELKRKLEQEQKLVEVLKKQLELEKRGQQQQ). Over residues 799–819 (ISTSAQPQRSTQLTAVQNGPT) the composition is skewed to polar residues. The interval 799 to 829 (ISTSAQPQRSTQLTAVQNGPTSLHEKSSTPP) is disordered.

In terms of assembly, interacts with SRF.

The protein localises to the nucleus. Functionally, poor transcriptional factor which uses the canonical single or multiple CArG boxes DNA sequence. Acts as a cofactor of serum response factor (SRF) with the potential to modulate SRF target genes. The polypeptide is Myocardin-related transcription factor B (mrtfb) (Xenopus laevis (African clawed frog)).